The following is a 160-amino-acid chain: Cytochrome b6-f complex subunit 4 (160 aa).

3 helical membrane-spanning segments follow: residues 36 to 56 (LLYI…GLAV), 95 to 115 (LLGV…PFLE), and 131 to 151 (TVFL…TLPI).

This sequence belongs to the cytochrome b family. PetD subfamily. The 4 large subunits of the cytochrome b6-f complex are cytochrome b6, subunit IV (17 kDa polypeptide, petD), cytochrome f and the Rieske protein, while the 4 small subunits are petG, petL, petM and petN. The complex functions as a dimer.

It is found in the plastid. Its subcellular location is the chloroplast thylakoid membrane. In terms of biological role, component of the cytochrome b6-f complex, which mediates electron transfer between photosystem II (PSII) and photosystem I (PSI), cyclic electron flow around PSI, and state transitions. In Coffea arabica (Arabian coffee), this protein is Cytochrome b6-f complex subunit 4.